Consider the following 101-residue polypeptide: Small ribosomal subunit protein uS14 (101 aa).

Belongs to the universal ribosomal protein uS14 family. In terms of assembly, part of the 30S ribosomal subunit. Contacts proteins S3 and S10.

Binds 16S rRNA, required for the assembly of 30S particles and may also be responsible for determining the conformation of the 16S rRNA at the A site. The sequence is that of Small ribosomal subunit protein uS14 from Hyphomonas neptunium (strain ATCC 15444).